The following is a 251-amino-acid chain: Isopentenyl-diphosphate delta-isomerase (251 aa).

Lysine 49 is a binding site for substrate. 2 residues coordinate Mg(2+): histidine 53 and histidine 66. A Nudix hydrolase domain is found at leucine 64–leucine 212. Substrate contacts are provided by arginine 86 and lysine 90. Residue cysteine 102 is part of the active site. A substrate-binding site is contributed by serine 103. Mg(2+) contacts are provided by glutamate 162 and glutamate 164. The active site involves glutamate 164.

This sequence belongs to the IPP isomerase type 1 family. Mg(2+) is required as a cofactor.

Its subcellular location is the cytoplasm. It carries out the reaction isopentenyl diphosphate = dimethylallyl diphosphate. It participates in isoprenoid biosynthesis; dimethylallyl diphosphate biosynthesis; dimethylallyl diphosphate from isopentenyl diphosphate: step 1/1. Functionally, isopentenyl-diphosphate delta-isomerase; part of the second module of ergosterol biosynthesis pathway that includes the middle steps of the pathway. The second module is carried out in the vacuole and involves the formation of farnesyl diphosphate, which is also an important intermediate in the biosynthesis of ubiquinone, dolichol, heme and prenylated proteins. Activity by the mevalonate kinase first converts mevalonate into 5-phosphomevalonate. 5-phosphomevalonate is then further converted to 5-diphosphomevalonate by the phosphomevalonate kinase. The diphosphomevalonate decarboxylase then produces isopentenyl diphosphate. The isopentenyl-diphosphate delta-isomerase then catalyzes the 1,3-allylic rearrangement of the homoallylic substrate isopentenyl (IPP) to its highly electrophilic allylic isomer, dimethylallyl diphosphate (DMAPP). Finally the farnesyl diphosphate synthase catalyzes the sequential condensation of isopentenyl pyrophosphate with dimethylallyl pyrophosphate, and then with the resultant geranylpyrophosphate to the ultimate product farnesyl pyrophosphate. This chain is Isopentenyl-diphosphate delta-isomerase, found in Phaffia rhodozyma (Yeast).